A 391-amino-acid polypeptide reads, in one-letter code: 1-deoxy-D-xylulose 5-phosphate reductoisomerase (391 aa).

N109 lines the NADPH pocket. Residue K110 coordinates 1-deoxy-D-xylulose 5-phosphate. E111 serves as a coordination point for NADPH. D135 contacts Mn(2+). S136, E137, S171, and H194 together coordinate 1-deoxy-D-xylulose 5-phosphate. E137 is a binding site for Mn(2+). Residue G200 coordinates NADPH. Positions 207, 212, 213, and 216 each coordinate 1-deoxy-D-xylulose 5-phosphate. E216 contributes to the Mn(2+) binding site.

Belongs to the DXR family. Homodimer. The cofactor is Mg(2+). Mn(2+) serves as cofactor.

The catalysed reaction is 2-C-methyl-D-erythritol 4-phosphate + NADP(+) = 1-deoxy-D-xylulose 5-phosphate + NADPH + H(+). It functions in the pathway isoprenoid biosynthesis; isopentenyl diphosphate biosynthesis via DXP pathway; isopentenyl diphosphate from 1-deoxy-D-xylulose 5-phosphate: step 1/6. Catalyzes the NADPH-dependent rearrangement and reduction of 1-deoxy-D-xylulose-5-phosphate (DXP) to 2-C-methyl-D-erythritol 4-phosphate (MEP). The polypeptide is 1-deoxy-D-xylulose 5-phosphate reductoisomerase (Blochmanniella floridana).